Here is a 299-residue protein sequence, read N- to C-terminus: Nucleotide-binding protein RER_30260 (299 aa).

An ATP-binding site is contributed by 19 to 26 (GLSGAGLS). 70-73 (DVRS) serves as a coordination point for GTP.

Belongs to the RapZ-like family.

In terms of biological role, displays ATPase and GTPase activities. The protein is Nucleotide-binding protein RER_30260 of Rhodococcus erythropolis (strain PR4 / NBRC 100887).